A 93-amino-acid chain; its full sequence is Small ribosomal subunit protein uS19 (93 aa).

Residues 73–93 (EFSPTRTYRGHNKKDKKIQKK) are disordered. The span at 80–93 (YRGHNKKDKKIQKK) shows a compositional bias: basic residues.

The protein belongs to the universal ribosomal protein uS19 family.

Its function is as follows. Protein S19 forms a complex with S13 that binds strongly to the 16S ribosomal RNA. The protein is Small ribosomal subunit protein uS19 (rpsS) of Aster yellows phytoplasma.